The primary structure comprises 261 residues: Calcium-binding protein 8 (261 aa).

The interval 1 to 39 (MRLPEQPGEGKPENEKKGDGGALGGGEEPPRSQAPDFPT) is disordered. Topologically, residues 1–234 (MRLPEQPGEG…QNRQTCVRKS (234 aa)) are cytoplasmic. The segment covering 8-19 (GEGKPENEKKGD) has biased composition (basic and acidic residues). 2 EF-hand domains span residues 78 to 113 (EELDEIREAFRVLDRDGNGFISKQELGMAMRSLGYM) and 114 to 149 (PSEVELAIIMQRLDMDGDGQVDFDEFMTILGPKLVS). Residues aspartate 91, aspartate 93, asparagine 95, glutamate 102, aspartate 127, aspartate 129, aspartate 131, glutamine 133, and glutamate 138 each coordinate Ca(2+). The chain crosses the membrane as a helical; Anchor for type IV membrane protein span at residues 235-255 (LICAFAMAFIISVMLIAANQI). Residues 256 to 261 (LRSGME) lie on the Extracellular side of the membrane.

Interacts with PI4KB. This binding competes with FREQ/NCS1 binding in a calcium-dependent manner. As to expression, brain specific.

Its subcellular location is the golgi apparatus. It localises to the trans-Golgi network membrane. The protein resides in the cytoplasm. It is found in the perinuclear region. The protein localises to the cell membrane. In terms of biological role, negatively regulates Golgi-to-plasma membrane trafficking by interacting with PI4KB and inhibiting its activity. May play a role in the physiology of neurons and is potentially important in memory and learning. This is Calcium-binding protein 8 (CALN1) from Homo sapiens (Human).